The sequence spans 206 residues: Large ribosomal subunit protein mL40 (206 aa).

The transit peptide at 1 to 46 directs the protein to the mitochondrion; that stretch reads MATGVMLCAARALRPRSWIPGTCQAHVRHTHQRASLLAFWDLIPMR. Residues 170–189 are disordered; the sequence is PFEKEGPHYTPPISNYQAPE.

The protein belongs to the mitochondrion-specific ribosomal protein mL40 family. In terms of assembly, component of the mitochondrial ribosome large subunit (39S) which comprises a 16S rRNA and about 50 distinct proteins. In terms of tissue distribution, ubiquitous.

It is found in the mitochondrion. The sequence is that of Large ribosomal subunit protein mL40 (Mrpl40) from Mus musculus (Mouse).